The primary structure comprises 180 residues: ATP synthase subunit delta (180 aa).

It belongs to the ATPase delta chain family. As to quaternary structure, F-type ATPases have 2 components, F(1) - the catalytic core - and F(0) - the membrane proton channel. F(1) has five subunits: alpha(3), beta(3), gamma(1), delta(1), epsilon(1). F(0) has three main subunits: a(1), b(2) and c(10-14). The alpha and beta chains form an alternating ring which encloses part of the gamma chain. F(1) is attached to F(0) by a central stalk formed by the gamma and epsilon chains, while a peripheral stalk is formed by the delta and b chains.

It is found in the cell membrane. F(1)F(0) ATP synthase produces ATP from ADP in the presence of a proton or sodium gradient. F-type ATPases consist of two structural domains, F(1) containing the extramembraneous catalytic core and F(0) containing the membrane proton channel, linked together by a central stalk and a peripheral stalk. During catalysis, ATP synthesis in the catalytic domain of F(1) is coupled via a rotary mechanism of the central stalk subunits to proton translocation. Its function is as follows. This protein is part of the stalk that links CF(0) to CF(1). It either transmits conformational changes from CF(0) to CF(1) or is implicated in proton conduction. This is ATP synthase subunit delta from Ligilactobacillus salivarius (strain UCC118) (Lactobacillus salivarius).